The following is a 528-amino-acid chain: FAD-dependent monooxygenase DEP2 (528 aa).

The N-terminal stretch at 1-23 is a signal peptide; it reads MEDGRSTFKVIIIGAGVTGLTLA. Residues aspartate 37, arginine 110, aspartate 311, and glycine 324 each contribute to the FAD site. Residues 479 to 499 traverse the membrane as a helical segment; it reads VFPQILGVLMVMWSSVWLFHL. An N-linked (GlcNAc...) asparagine glycan is attached at asparagine 521.

Belongs to the paxM FAD-dependent monooxygenase family. FAD is required as a cofactor.

The protein resides in the membrane. The protein operates within polyketide biosynthesis. Functionally, FAD-dependent monooxygenase; part of the gene cluster that mediates the biosynthesis of depudecin, a highly oxidized eleven-carbon linear polyketide that acts as a histone deacetylase (HDAC) inhibitor and makes a small contribution to pathogenesis. The reducing polyketide synthase DEP5 is the central enzyme in depudecin biosynthesis by yielding the backbone polyketide chain. The monooxygenases DEP2 and DEP4, as well as the uncharacterized protein DEP1, then act as tailoring enzymes to modify the intermediate polyketide chain into depudecin. This Alternaria brassicicola (Dark leaf spot agent) protein is FAD-dependent monooxygenase DEP2.